The chain runs to 215 residues: Glutathione S-transferase F9 (215 aa).

The GST N-terminal domain occupies Val2 to Gly81. Ala11–Ser12 is a glutathione binding site. At Ser12 the chain carries Phosphoserine. Met35 bears the Methionine sulfoxide mark. Glutathione contacts are provided by residues His39–Lys40, Thr52–Val53, and Glu65–Ser66. One can recognise a GST C-terminal domain in the interval Thr88–Ala215. 3 positions are modified to methionine sulfoxide: Met118, Met123, and Met184.

This sequence belongs to the GST superfamily. Phi family. Post-translationally, oxidated at Met-35, Met-118, Met-123 and Met-184 in oxidative stress conditions (e.g. hydrogen peroxide H(2)O(2)).

It is found in the cytoplasm. Its subcellular location is the cytosol. The catalysed reaction is RX + glutathione = an S-substituted glutathione + a halide anion + H(+). Its activity is regulated as follows. Redox-regulated enzyme; in oxidative stress conditions methionine oxidation ensure a thermodynamic and structural compensatory mechanism to guarantee H(2)O(2) peroxidase activity despite transferase activity inhibition. In vitro, possesses glutathione S-transferase activity toward 1-chloro-2,4-dinitrobenzene (CDNB) and benzyl isothiocyanate (BITC), and glutathione peroxidase activity toward cumene hydroperoxide and linoleic acid-13-hydroperoxide. May be involved in the conjugation of reduced glutathione to a wide number of exogenous and endogenous hydrophobic electrophiles and have a detoxification role against certain herbicides. The protein is Glutathione S-transferase F9 of Arabidopsis thaliana (Mouse-ear cress).